A 504-amino-acid chain; its full sequence is Maturase K (504 aa).

It belongs to the intron maturase 2 family. MatK subfamily.

The protein localises to the plastid. Its subcellular location is the chloroplast. Functionally, usually encoded in the trnK tRNA gene intron. Probably assists in splicing its own and other chloroplast group II introns. This Prionotes cerinthoides (Climbing heath) protein is Maturase K.